The sequence spans 617 residues: MGKIIGIDLGTTNSCVSVMEGGNPVVIPNAEGSRTTPSVVAFKEDGERLVGQVAKRQAITNPDKTIISIKRHMGTDYRVNVDGKDYSPEEISAMILQKLKADAEAYLGETVTEAVITVPAYFNDSERQATKNAGKIAGLDVKRIINEPTAASLAYGLDKMDKSHKIFVYDLGGGTFDVSILELGDGVFEVKATNGNTKLGGDDFDQKIMDYIAETFKAENGIDLRNDKMALQRLKEAAEKAKIELSSSTKTNINLPFITADATGPKHIDMDLTRAKFEELSADLVQATIEPMKKALADAELTINDIDKVVLVGGSTRIPAVQEAVQKFTGKEPSKGVNPDEVVAMGAAVQAGVLTGEVKDILLLDVTPLTLGIETMGGVATPLIERNTTIPTRKSQIFSTAADNQTSVDIHIVQGERKMAGDNKTLGRFQLSGIAPAPRGIPQIEVSFDIDANGILNVSAKDKGTGKEANITITASTNLSDDEIDKAVKEAEKFAAEDEKRKESVEVKNNADSALYQTEKALKDLGDKVEEADKKNVEEKLEALRQVKDGEDLEAIKKATTELTEEFYKVSSKLYQQAGAEAQQGAQGTQGADMGGNAQGKDDDNVVDADFKVEDDK.

T175 bears the Phosphothreonine; by autocatalysis mark. Residues 578-592 (AGAEAQQGAQGTQGA) are compositionally biased toward low complexity. Positions 578–617 (AGAEAQQGAQGTQGADMGGNAQGKDDDNVVDADFKVEDDK) are disordered. Residues 600–617 (GKDDDNVVDADFKVEDDK) show a composition bias toward basic and acidic residues.

The protein belongs to the heat shock protein 70 family.

Acts as a chaperone. This Clostridium novyi (strain NT) protein is Chaperone protein DnaK.